Reading from the N-terminus, the 205-residue chain is SREBP regulating gene protein (205 aa).

Over Met-1–Arg-16 the chain is Cytoplasmic. A helical transmembrane segment spans residues Trp-17–Phe-35. Residues Lys-36–Ala-205 are Lumenal-facing. Asn-67 carries an N-linked (GlcNAc...) asparagine glycan.

Belongs to the SPRING family. As to quaternary structure, interacts with SCAP. As to expression, ubiquitously expressed with a slightly higher expression in the liver and kidney.

It is found in the golgi apparatus membrane. In terms of biological role, positively regulates hepatic SREBP signaling pathway by modulating the proper localization of SCAP (SREBP cleavage-activating protein) to the endoplasmic reticulum, thereby controlling the level of functional SCAP. Plays a crucial role during embryogenesis. The sequence is that of SREBP regulating gene protein (Spring1) from Mus musculus (Mouse).